A 433-amino-acid chain; its full sequence is Tyrosine--tRNA ligase (433 aa).

L-tyrosine is bound at residue tyrosine 34. The 'HIGH' region motif lies at 39–48; sequence PTASSLHVGS. Residues tyrosine 169 and glutamine 173 each coordinate L-tyrosine. The 'KMSKS' region motif lies at 229 to 233; the sequence is KMGKT. Lysine 232 contributes to the ATP binding site. In terms of domain architecture, S4 RNA-binding spans 364 to 432; it reads IPAFVLFHTV…RYHTIVVRKG (69 aa).

The protein belongs to the class-I aminoacyl-tRNA synthetase family. TyrS type 1 subfamily. As to quaternary structure, homodimer.

It is found in the cytoplasm. The enzyme catalyses tRNA(Tyr) + L-tyrosine + ATP = L-tyrosyl-tRNA(Tyr) + AMP + diphosphate + H(+). Its function is as follows. Catalyzes the attachment of tyrosine to tRNA(Tyr) in a two-step reaction: tyrosine is first activated by ATP to form Tyr-AMP and then transferred to the acceptor end of tRNA(Tyr). The polypeptide is Tyrosine--tRNA ligase (Desulfosudis oleivorans (strain DSM 6200 / JCM 39069 / Hxd3) (Desulfococcus oleovorans)).